Here is a 578-residue protein sequence, read N- to C-terminus: Vacuolar protein 8 (578 aa).

9 ARM repeats span residues 58–95, 96–135, 137–176, 178–217, 219–258, 262–301, 303–342, 344–384, and 428–467; these read NRAE…FAEI, TERD…NLAV, ADNK…NLAT, EDNK…NMTH, DDNR…NIAV, NRKR…NLAS, EKYQ…NISI, PLNE…NLAA, and DELK…NLSS.

It belongs to the beta-catenin family.

Its subcellular location is the vacuole membrane. Functionally, functions in both vacuole inheritance and protein targeting from the cytoplasm to vacuole. This is Vacuolar protein 8 (vac8) from Aspergillus oryzae (strain ATCC 42149 / RIB 40) (Yellow koji mold).